We begin with the raw amino-acid sequence, 126 residues long: Hydrogenase maturation factor HypA (126 aa).

His2 serves as a coordination point for Ni(2+). Positions 78, 81, 97, and 100 each coordinate Zn(2+).

It belongs to the HypA/HybF family.

Functionally, involved in the maturation of [NiFe] hydrogenases. Required for nickel insertion into the metal center of the hydrogenase. The chain is Hydrogenase maturation factor HypA from Methanococcus maripaludis (strain C6 / ATCC BAA-1332).